The following is a 2473-amino-acid chain: Reducing polyketide synthase grgA (2473 aa).

Residues Arg-15–Ser-446 form the Ketosynthase family 3 (KS3) domain. Active-site for beta-ketoacyl synthase activity residues include Cys-188, His-327, and His-366. One can recognise a Malonyl-CoA:ACP transacylase (MAT) domain in the interval Ile-559–Ala-882. Positions His-956–Pro-1099 are N-terminal hotdog fold. The segment at His-956–Arg-1260 is dehydratase (DH) domain. The 307-residue stretch at His-956–Pro-1262 folds into the PKS/mFAS DH domain. His-990 acts as the Proton acceptor; for dehydratase activity in catalysis. The tract at residues Met-1114–Pro-1262 is C-terminal hotdog fold. Asp-1172 (proton donor; for dehydratase activity) is an active-site residue. The segment at Thr-1300–Gln-1606 is methyltransfrase (MT) domain. In terms of domain architecture, Ketoreductase (KR) spans Thr-2108 to Leu-2281. One can recognise a Carrier domain in the interval Ala-2388–Ser-2473. At Ser-2426 the chain carries O-(pantetheine 4'-phosphoryl)serine.

It depends on pantetheine 4'-phosphate as a cofactor.

The protein operates within secondary metabolite biosynthesis. Reducing polyketide synthase; part of the gene cluster that mediates the biosynthesis of gregatin A, a fungal polyketide featuring an alkylated furanone core. The PKS grgA synthesizes C11 and C4 polyketide chains in the presence and absence of the trans-enoyl reductase grgB, respectively. The polyketide transferase grgF is then responsible for the fusion of the two carbon chains to produce the furanone skeleton of gregatin A. Next, the cytochrome P450 monooxygenase grgG accepts performs the oxidative cyclization to furnish the gregatin scaffold and leads to the formation of desmethylgregatin A. Finally, the O-methyltransferase grgD methylates the carboxyl group of desmethylgregatin A to provide gregatin A. This is Reducing polyketide synthase grgA from Penicillium sp.